Reading from the N-terminus, the 413-residue chain is Multifunctional CCA protein (413 aa).

Gly-8 and Arg-11 together coordinate ATP. CTP contacts are provided by Gly-8 and Arg-11. Positions 21 and 23 each coordinate Mg(2+). Residues Arg-91, Arg-143, and Arg-146 each coordinate ATP. CTP-binding residues include Arg-91, Arg-143, and Arg-146. The 102-residue stretch at 232–333 folds into the HD domain; that stretch reads TGVHVMMVVD…VRLFERSDAL (102 aa).

It belongs to the tRNA nucleotidyltransferase/poly(A) polymerase family. Bacterial CCA-adding enzyme type 1 subfamily. In terms of assembly, monomer. Can also form homodimers and oligomers. The cofactor is Mg(2+). It depends on Ni(2+) as a cofactor.

The catalysed reaction is a tRNA precursor + 2 CTP + ATP = a tRNA with a 3' CCA end + 3 diphosphate. The enzyme catalyses a tRNA with a 3' CCA end + 2 CTP + ATP = a tRNA with a 3' CCACCA end + 3 diphosphate. In terms of biological role, catalyzes the addition and repair of the essential 3'-terminal CCA sequence in tRNAs without using a nucleic acid template. Adds these three nucleotides in the order of C, C, and A to the tRNA nucleotide-73, using CTP and ATP as substrates and producing inorganic pyrophosphate. tRNA 3'-terminal CCA addition is required both for tRNA processing and repair. Also involved in tRNA surveillance by mediating tandem CCA addition to generate a CCACCA at the 3' terminus of unstable tRNAs. While stable tRNAs receive only 3'-terminal CCA, unstable tRNAs are marked with CCACCA and rapidly degraded. The chain is Multifunctional CCA protein from Burkholderia orbicola (strain MC0-3).